A 105-amino-acid chain; its full sequence is Small ribosomal subunit protein uS10 (105 aa).

Belongs to the universal ribosomal protein uS10 family. As to quaternary structure, part of the 30S ribosomal subunit.

Involved in the binding of tRNA to the ribosomes. The protein is Small ribosomal subunit protein uS10 of Synechococcus sp. (strain JA-2-3B'a(2-13)) (Cyanobacteria bacterium Yellowstone B-Prime).